The chain runs to 100 residues: Urease subunit gamma (100 aa).

This sequence belongs to the urease gamma subunit family. Heterotrimer of UreA (gamma), UreB (beta) and UreC (alpha) subunits. Three heterotrimers associate to form the active enzyme.

It is found in the cytoplasm. The enzyme catalyses urea + 2 H2O + H(+) = hydrogencarbonate + 2 NH4(+). Its pathway is nitrogen metabolism; urea degradation; CO(2) and NH(3) from urea (urease route): step 1/1. The sequence is that of Urease subunit gamma from Pseudomonas syringae pv. tomato (strain ATCC BAA-871 / DC3000).